Consider the following 240-residue polypeptide: Coatomer subunit delta (240 aa).

A compositionally biased stretch (low complexity) spans 215–226; it reads AAAKASSAPKAK. Positions 215–240 are disordered; sequence AAAKASSAPKAKGMQLGKKKNTSLLY. A compositionally biased stretch (basic residues) spans 231-240; it reads GKKKNTSLLY.

It belongs to the adaptor complexes medium subunit family. Delta-COP subfamily. Oligomeric complex that consists of at least the alpha, beta, beta', gamma, delta, epsilon and zeta subunits.

It localises to the cytoplasm. Its subcellular location is the nucleus. In terms of biological role, the coatomer is a cytosolic protein complex that binds to dilysine motifs and reversibly associates with Golgi non-clathrin-coated vesicles, which further mediate biosynthetic protein transport from the ER, via the Golgi up to the trans Golgi network. Coatomer complex is required for budding from Golgi membranes, and is essential for the retrograde Golgi-to-ER transport of dilysine-tagged proteins. The chain is Coatomer subunit delta (ret2) from Schizosaccharomyces pombe (strain 972 / ATCC 24843) (Fission yeast).